The primary structure comprises 182 residues: UPF0316 protein Sde_0566 (182 aa).

3 helical membrane passes run 7-27 (VAPE…VSLG), 41-61 (LAAF…GQVF), and 67-87 (WYLA…GMWI).

It belongs to the UPF0316 family.

The protein resides in the cell membrane. This is UPF0316 protein Sde_0566 from Saccharophagus degradans (strain 2-40 / ATCC 43961 / DSM 17024).